The sequence spans 491 residues: Probable glycine dehydrogenase (decarboxylating) subunit 2 (491 aa).

At K274 the chain carries N6-(pyridoxal phosphate)lysine.

The protein belongs to the GcvP family. C-terminal subunit subfamily. In terms of assembly, the glycine cleavage system is composed of four proteins: P, T, L and H. In this organism, the P 'protein' is a heterodimer of two subunits. Pyridoxal 5'-phosphate serves as cofactor.

The enzyme catalyses N(6)-[(R)-lipoyl]-L-lysyl-[glycine-cleavage complex H protein] + glycine + H(+) = N(6)-[(R)-S(8)-aminomethyldihydrolipoyl]-L-lysyl-[glycine-cleavage complex H protein] + CO2. The glycine cleavage system catalyzes the degradation of glycine. The P protein binds the alpha-amino group of glycine through its pyridoxal phosphate cofactor; CO(2) is released and the remaining methylamine moiety is then transferred to the lipoamide cofactor of the H protein. The polypeptide is Probable glycine dehydrogenase (decarboxylating) subunit 2 (Shouchella clausii (strain KSM-K16) (Alkalihalobacillus clausii)).